Consider the following 290-residue polypeptide: Tegument protein VP22 (290 aa).

The segment covering 98–112 (STSHGRLSPTKTTPH) has biased composition (polar residues). The interval 98 to 156 (STSHGRLSPTKTTPHPKSAGVTPPQRVPARPATRAAAPSATPTQPDCVAKQRTSPGVNS) is disordered. Over residues 118-142 (VTPPQRVPARPATRAAAPSATPTQP) the composition is skewed to low complexity. The Nuclear localization signal signature appears at 146 to 149 (AKQR). The short motif at 219–231 (LDRFLKAAAIRIL) is the Nuclear export signal element.

This sequence belongs to the alphaherpesvirinae VP22 tegument protein family. As to quaternary structure, interacts with gE (via C-terminus); this interaction is necessary for the recruitment of VP22 to the Golgi and its packaging into virions. Interacts with gM (via C-terminus). Interacts with VP16; this interaction allows the formation of a tripartite complex composed of VP16, VP22 and UL41/VHS. Interacts with the capsid-binding protein UL16. Interacts with host CGAS. Post-translationally, highly phosphorylated in the host cell. Packaging is selective for underphosphorylated forms.

The protein localises to the virion tegument. It is found in the host cytoplasm. Its subcellular location is the host nucleus. The protein resides in the host Golgi apparatus. Tegument protein that plays different roles during the time course of infection. Participates in both the accumulation of viral mRNAs and viral protein translation at late time of infection. Modulates the RNase activity of the virion host shutoff protein UL41 probably to ensure necessary levels of key cellular mRNAs and proteins. Plays a role in microtubule reorganization that occurs after viral infection by stabilizing microtubule network. Plays a role in the inhibition of host innate immune system by targeting the CGAS enzymatic activity which is the principal cytosolic DNA sensor that detects invading viral DNA. Acts by mediating disruption of liquid-like droplets in which CGAS is activated, thereby preventing CGAS activity. The polypeptide is Tegument protein VP22 (11) (Equus caballus (Horse)).